Here is a 552-residue protein sequence, read N- to C-terminus: ATP synthase subunit alpha, mitochondrial (552 aa).

Residues 1 to 47 (MSIFSARLASSVARNLPKAANQVACKAAYPAASLAARKLHVASTQRS) constitute a mitochondrion transit peptide. 211-218 (GDRQTGKT) is an ATP binding site.

It belongs to the ATPase alpha/beta chains family. In terms of assembly, F-type ATPases have 2 components, CF(1) - the catalytic core - and CF(0) - the membrane proton channel. CF(1) has five subunits: alpha(3), beta(3), gamma(1), delta(1), epsilon(1). CF(0) has three main subunits: a, b and c.

The protein resides in the mitochondrion inner membrane. Mitochondrial membrane ATP synthase (F(1)F(0) ATP synthase or Complex V) produces ATP from ADP in the presence of a proton gradient across the membrane which is generated by electron transport complexes of the respiratory chain. F-type ATPases consist of two structural domains, F(1) - containing the extramembraneous catalytic core, and F(0) - containing the membrane proton channel, linked together by a central stalk and a peripheral stalk. During catalysis, ATP synthesis in the catalytic domain of F(1) is coupled via a rotary mechanism of the central stalk subunits to proton translocation. Subunits alpha and beta form the catalytic core in F(1). Rotation of the central stalk against the surrounding alpha(3)beta(3) subunits leads to hydrolysis of ATP in three separate catalytic sites on the beta subunits. Subunit alpha does not bear the catalytic high-affinity ATP-binding sites. The sequence is that of ATP synthase subunit alpha, mitochondrial (blw) from Drosophila melanogaster (Fruit fly).